The chain runs to 723 residues: Pescadillo homolog (723 aa).

In terms of domain architecture, BRCT spans 380–497 (EAGSLFATFT…KLLRPDLYAP (118 aa)). 2 disordered regions span residues 440-471 (RPQL…RVPG) and 501-723 (LPPH…LNKK). Positions 522–551 (LADQEEEGEAERAAEAEEYENDEQEESGEE) form a coiled coil. 3 stretches are compositionally biased toward acidic residues: residues 537–550 (AEEY…ESGE), 588–600 (MAED…DDGD), and 608–622 (FDQD…EDEE). Composition is skewed to basic and acidic residues over residues 623-634 (EKARSQHQKELE), 670-681 (KKKEEEELERQK), and 700-709 (KKQDAEAEKL). The stretch at 656–723 (KKQQAPLAKK…RKIEQGLNKK (68 aa)) forms a coiled coil. A compositionally biased stretch (basic residues) spans 710–723 (RQKRRKIEQGLNKK).

Belongs to the pescadillo family. In terms of assembly, component of the NOP7 complex, composed of ERB1, NOP7 and YTM1. The complex is held together by ERB1, which interacts with NOP7 via its N-terminal domain and with YTM1 via a high-affinity interaction between the seven-bladed beta-propeller domains of the 2 proteins. The NOP7 complex associates with the 66S pre-ribosome.

It localises to the nucleus. It is found in the nucleolus. The protein localises to the nucleoplasm. Functionally, component of the NOP7 complex, which is required for maturation of the 25S and 5.8S ribosomal RNAs and formation of the 60S ribosome. This Ajellomyces capsulatus (strain NAm1 / WU24) (Darling's disease fungus) protein is Pescadillo homolog.